Reading from the N-terminus, the 444-residue chain is Probable polygalacturonase At1g80170 (444 aa).

Residues 1 to 28 (MSYSRGGTLVTLLLLLVVASSLALTANA) form the signal peptide. PbH1 repeat units follow at residues 208–234 (CRRVTISGLKVIAPATSPNTDGIHISV), 235–256 (SRGIVIDNTTVSTGDDCISIVK), 258–278 (STQISISNIICGPGHGISIGS), 288–309 (VRDITVDTAIISDTANGVRIKT), 317–338 (VSKIIFRNIKMNNVSNPIIIDQ), and 351–378 (TSAISIENISFVHVRGTSASKEAIKISC). Asp249 (proton donor) is an active-site residue. Residue His272 is part of the active site.

This sequence belongs to the glycosyl hydrolase 28 family. In terms of tissue distribution, expressed in young, mature and dehiscing anthers. Found in stems, but not in roots or in abscission zone of floral organs.

Its subcellular location is the secreted. It is found in the cell wall. The catalysed reaction is (1,4-alpha-D-galacturonosyl)n+m + H2O = (1,4-alpha-D-galacturonosyl)n + (1,4-alpha-D-galacturonosyl)m.. The polypeptide is Probable polygalacturonase At1g80170 (Arabidopsis thaliana (Mouse-ear cress)).